The chain runs to 20 residues: 7.2 kDa cytotoxin RVV-7 (20 aa).

In terms of assembly, monomer. Homodimerizes during storage at 30 degrees Celsius (observed after 3 days). As to expression, expressed by the venom gland.

Its subcellular location is the secreted. It is found in the target cell membrane. This three-finger cytotoxin shows cytotoxicity and direct nephrotoxicity. The cytotoxicity has been observed on B16F10 melanoma cells (EC(50)=2.56 uM) and on kidney proximal tubular epithelium LLCPK1 cells (EC(50)=4.79 uM); it is due to necrotic cell death and not to apoptosis. Direct nephrotoxicity has been deduced from binding to LLCPK1 cell line and to kidney membranes. In addition, after intravenous injection into mice tail vein, the toxin principally accumulates in kidney, but only minimally in blood, liver and brain. This chain is 7.2 kDa cytotoxin RVV-7, found in Daboia russelii (Russel's viper).